A 477-amino-acid chain; its full sequence is Aspartyl/glutamyl-tRNA(Asn/Gln) amidotransferase subunit B (477 aa).

It belongs to the GatB/GatE family. GatB subfamily. Heterotrimer of A, B and C subunits.

The catalysed reaction is L-glutamyl-tRNA(Gln) + L-glutamine + ATP + H2O = L-glutaminyl-tRNA(Gln) + L-glutamate + ADP + phosphate + H(+). It catalyses the reaction L-aspartyl-tRNA(Asn) + L-glutamine + ATP + H2O = L-asparaginyl-tRNA(Asn) + L-glutamate + ADP + phosphate + 2 H(+). Functionally, allows the formation of correctly charged Asn-tRNA(Asn) or Gln-tRNA(Gln) through the transamidation of misacylated Asp-tRNA(Asn) or Glu-tRNA(Gln) in organisms which lack either or both of asparaginyl-tRNA or glutaminyl-tRNA synthetases. The reaction takes place in the presence of glutamine and ATP through an activated phospho-Asp-tRNA(Asn) or phospho-Glu-tRNA(Gln). In Lactococcus lactis subsp. cremoris (strain SK11), this protein is Aspartyl/glutamyl-tRNA(Asn/Gln) amidotransferase subunit B.